We begin with the raw amino-acid sequence, 252 residues long: CLAVATA3/ESR (CLE)-related protein 4A-2 (252 aa).

An N-terminal signal peptide occupies residues 1 to 21; sequence MAKNAMLCLLILRVVLALAFA. The segment at 21–83 is required for secretion from the host cytoplasm to the host apoplasm; sequence ATNKKGDEEP…SNQLPNNNWM (63 aa). An N-linked (GlcNAc...) asparagine glycan is attached at Asn-32. A disordered region spans residues 116–252; sequence RKTGMHSQRH…APAGPDPIHH (137 aa). 4 stretches are compositionally biased toward basic and acidic residues: residues 125–137, 144–179, 186–200, and 207–242; these read HHEE…EKRV, PIHH…EKRV, PIHH…EKRA, and PTHH…EKRG. One copy of the A-1 repeat lies at 127–135; it reads EETTLEQEK. The segment at 127–219 is 6 X approximate repeat A; sequence EETTLEQEKR…HEETTLEQEK (93 aa). Residues 136 to 147 form a CLE-1 repeat; the sequence is RVAGAGPDPIHH. A 6 X approximate repeat CLE region spans residues 136–252; that stretch reads RVAGAGPDPI…APAGPDPIHH (117 aa). The A-2 repeat unit spans residues 148 to 156; it reads QDTTLEQEK. The stretch at 157-168 is one CLE-2 repeat; sequence RAVPAGPDPKHH. One copy of the A-3 repeat lies at 169–177; the sequence is EETTLEQEK. Residues 178–189 form a CLE-3 repeat; the sequence is RVAGAGPDPIHH. Residues 190–198 form an A-4 repeat; sequence QDTTLEQEK. The stretch at 199-210 is one CLE-4 repeat; that stretch reads RAVPAGPDPTHH. The A-5 repeat unit spans residues 211 to 219; the sequence is EETTLEQEK. The stretch at 220–231 is one CLE-5 repeat; that stretch reads RAVPAGPDPKHH. Residues 232 to 240 form an A-6 repeat; it reads EETTFEQEK. Residues 241–252 form a CLE-6 repeat; that stretch reads RGAPAGPDPIHH.

Belongs to the CLV3/ESR signal peptide family. Highly expressed exclusively within the dorsal esophageal gland cell during syncytium formation in host plants.

It localises to the secreted. Its subcellular location is the host cytoplasm. The protein resides in the host extracellular space. It is found in the extracellular space. The protein localises to the apoplast. Mimics host plant CLE extracellular signal peptides that regulate cell fate. May play a role in the differentiation or division of feeding cells (syncytia) induced in plant roots during infection. In Globodera rostochiensis (Golden nematode worm), this protein is CLAVATA3/ESR (CLE)-related protein 4A-2 (CLE-4A-2).